Reading from the N-terminus, the 272-residue chain is MEFWQNIYSHFNPVAFNLGSIAVHWYGIMYALALLSAIFVAKWFIKHDKLAISNDLFDSYIWWAEIGVILGARLGYVLFYDSHTMYYITHPWQIFNPYINGVYAGISGMSYHGAFFGFIIASYLFCRKNKVSFWFITDIAVLGVSAAYIFGRLGNFFNQELIGRVTDVPWGIYVGGVLRHPSQIYEAILEGLFVFLILAFYRKRKTFDGQLALMYGILYAIARIIAEFFRQPDSQLGFLVGEWLTMGILQSLIILIICVGFYVVRRKIIIKN.

Transmembrane regions (helical) follow at residues 21–41 (IAVH…IFVA), 60–80 (YIWW…VLFY), 101–121 (GVYA…FIIA), and 131–151 (VSFW…YIFG). Residue R152 participates in a 1,2-diacyl-sn-glycero-3-phospho-(1'-sn-glycerol) binding. A run of 3 helical transmembrane segments spans residues 181-201 (PSQI…LAFY), 209-229 (GQLA…AEFF), and 244-264 (LTMG…FYVV).

Belongs to the Lgt family.

It localises to the cell inner membrane. It catalyses the reaction L-cysteinyl-[prolipoprotein] + a 1,2-diacyl-sn-glycero-3-phospho-(1'-sn-glycerol) = an S-1,2-diacyl-sn-glyceryl-L-cysteinyl-[prolipoprotein] + sn-glycerol 1-phosphate + H(+). The protein operates within protein modification; lipoprotein biosynthesis (diacylglyceryl transfer). Its function is as follows. Catalyzes the transfer of the diacylglyceryl group from phosphatidylglycerol to the sulfhydryl group of the N-terminal cysteine of a prolipoprotein, the first step in the formation of mature lipoproteins. The chain is Phosphatidylglycerol--prolipoprotein diacylglyceryl transferase from Aliarcobacter butzleri (strain RM4018) (Arcobacter butzleri).